The chain runs to 283 residues: Pantothenate synthetase (283 aa).

30-37 (MGNLHDAH) contributes to the ATP binding site. Catalysis depends on His37, which acts as the Proton donor. Gln61 serves as a coordination point for (R)-pantoate. Gln61 lines the beta-alanine pocket. 149–152 (GVKD) serves as a coordination point for ATP. Gln155 is a binding site for (R)-pantoate. Residues Val178 and 186–189 (MSSR) each bind ATP.

This sequence belongs to the pantothenate synthetase family. Homodimer.

The protein localises to the cytoplasm. It carries out the reaction (R)-pantoate + beta-alanine + ATP = (R)-pantothenate + AMP + diphosphate + H(+). It functions in the pathway cofactor biosynthesis; (R)-pantothenate biosynthesis; (R)-pantothenate from (R)-pantoate and beta-alanine: step 1/1. Catalyzes the condensation of pantoate with beta-alanine in an ATP-dependent reaction via a pantoyl-adenylate intermediate. The polypeptide is Pantothenate synthetase (Cellvibrio japonicus (strain Ueda107) (Pseudomonas fluorescens subsp. cellulosa)).